The chain runs to 476 residues: Rifampicin monooxygenase (476 aa).

Residues threonine 12, glutamate 31, lysine 32, glutamine 98, leucine 122, and threonine 156 each coordinate FAD. Positions 196 and 213 each coordinate rifampicin. FAD is bound by residues aspartate 277, leucine 290, and asparagine 291.

The protein belongs to the rifampicin monooxygenase family. FAD serves as cofactor.

The catalysed reaction is rifampicin + NADPH + O2 = rifampicin para-naphthoquinone carboxamide + NADP(+) + H2O + H(+). The enzyme catalyses rifampicin + NADH + O2 = rifampicin para-naphthoquinone carboxamide + NAD(+) + H2O + H(+). It catalyses the reaction rifamycin SV + NADPH + O2 = rifamycin SV para-naphthoquinone carboxamide + NADP(+) + H2O. It carries out the reaction rifamycin SV + NADH + O2 = rifamycin SV para-naphthoquinone carboxamide + NAD(+) + H2O. In terms of biological role, monooxygenase that can modify rifampicin, thereby inactivating its antibiotic activity. Inactivates a broad range of rifamycin antibiotics. This is Rifampicin monooxygenase from Streptomyces venezuelae (strain ATCC 10712 / CBS 650.69 / DSM 40230 / JCM 4526 / NBRC 13096 / PD 04745).